We begin with the raw amino-acid sequence, 348 residues long: tRNA pseudouridine synthase D (348 aa).

A substrate-binding site is contributed by Phe-27. Asp-80 functions as the Nucleophile in the catalytic mechanism. A substrate-binding site is contributed by Asn-129. A TRUD domain is found at 155–303 (GVPNYFGSQR…VESARRAVLL (149 aa)). Phe-329 contacts substrate.

This sequence belongs to the pseudouridine synthase TruD family.

It catalyses the reaction uridine(13) in tRNA = pseudouridine(13) in tRNA. Its function is as follows. Responsible for synthesis of pseudouridine from uracil-13 in transfer RNAs. The polypeptide is tRNA pseudouridine synthase D (Pectobacterium carotovorum subsp. carotovorum (strain PC1)).